The following is a 356-amino-acid chain: Magnesium-protoporphyrin IX monomethyl ester [oxidative] cyclase (356 aa).

Belongs to the AcsF family. The cofactor is Fe cation.

The catalysed reaction is Mg-protoporphyrin IX 13-monomethyl ester + 3 NADPH + 3 O2 + 2 H(+) = 3,8-divinyl protochlorophyllide a + 3 NADP(+) + 5 H2O. Its pathway is porphyrin-containing compound metabolism; chlorophyll biosynthesis (light-independent). In terms of biological role, catalyzes the formation of the isocyclic ring in chlorophyll biosynthesis. Mediates the cyclase reaction, which results in the formation of divinylprotochlorophyllide (Pchlide) characteristic of all chlorophylls from magnesium-protoporphyrin IX 13-monomethyl ester (MgPMME). This is Magnesium-protoporphyrin IX monomethyl ester [oxidative] cyclase from Synechococcus sp. (strain CC9605).